Here is a 500-residue protein sequence, read N- to C-terminus: Probable malate:quinone oxidoreductase (500 aa).

Belongs to the MQO family. It depends on FAD as a cofactor.

The catalysed reaction is (S)-malate + a quinone = a quinol + oxaloacetate. Its pathway is carbohydrate metabolism; tricarboxylic acid cycle; oxaloacetate from (S)-malate (quinone route): step 1/1. The sequence is that of Probable malate:quinone oxidoreductase from Corynebacterium aurimucosum (strain ATCC 700975 / DSM 44827 / CIP 107346 / CN-1) (Corynebacterium nigricans).